Here is a 516-residue protein sequence, read N- to C-terminus: BAR/IMD domain-containing adapter protein 2-like 2 (516 aa).

Residues 1–227 (MSGVNSDLLH…PTPLDQEAQL (227 aa)) enclose the IMD domain. Residues 200 to 273 (ADGWKEKVSE…SSSVGESLGL (74 aa)) form a disordered region. Residues 201-212 (DGWKEKVSESRS) are compositionally biased toward basic and acidic residues. The segment covering 226-236 (QLKSSVGSLLQ) has biased composition (polar residues). The span at 238–247 (GDREMDREPL) shows a compositional bias: basic and acidic residues. The span at 249 to 270 (RVPSRAPSPLPSRSRSSSVGES) shows a compositional bias: low complexity. The SH3 domain occupies 274-337 (GGGRSMRAIV…PAAYVASTED (64 aa)). Residues 355-376 (LLEPTSQSESDTQTYSEVSSPV) show a composition bias toward polar residues. The interval 355–516 (LLEPTSQSES…TNDRSAPRIQ (162 aa)) is disordered. Positions 434–450 (PDRRAESHFESKVELKN) are enriched in basic and acidic residues. The span at 454–465 (LPPPAPPLPNSP) shows a compositional bias: pro residues.

The protein resides in the cell membrane. Its function is as follows. Phosphoinositides-binding protein that induces the formation of planar or gently curved membrane structures. The sequence is that of BAR/IMD domain-containing adapter protein 2-like 2 (baiap2l2) from Danio rerio (Zebrafish).